The primary structure comprises 261 residues: Cytochrome c oxidase subunit 3 (261 aa).

Topologically, residues 1–15 are mitochondrial matrix; it reads MTHQTHAYHMVNPSP. The chain crosses the membrane as a helical span at residues 16-34; that stretch reads WPLTGALSALLMTSGLIMW. The Mitochondrial intermembrane portion of the chain corresponds to 35 to 40; the sequence is FHFNST. A helical transmembrane segment spans residues 41–66; the sequence is ALLMLGLTTNMLTMYQWWRDIIREST. The Mitochondrial matrix segment spans residues 67-72; it reads FQGHHT. Residues 73-105 traverse the membrane as a helical segment; that stretch reads PVVQKGLRYGMILFIISEVLFFTGFFWAFYHSS. Topologically, residues 106 to 128 are mitochondrial intermembrane; it reads LAPTPELGGCWPPTGINPLNPLE. A helical membrane pass occupies residues 129–152; that stretch reads VPLLNTSVLLASGVSITWAHHSLM. Residues 153–155 lie on the Mitochondrial matrix side of the membrane; it reads EGN. A helical membrane pass occupies residues 156–183; the sequence is RSHMLQALFITITLGVYFTLLQASEYYE. The Mitochondrial intermembrane segment spans residues 184–190; sequence APFTISD. The chain crosses the membrane as a helical span at residues 191-223; the sequence is GVYGSTFFVATGFHGLHVIIGSTFLIVCFFRQL. Over 224–232 the chain is Mitochondrial matrix; the sequence is KFHFTSNHH. A helical membrane pass occupies residues 233 to 256; it reads FGFEAAAWYWHFVDVVWLFLYVSI. Residues 257–261 lie on the Mitochondrial intermembrane side of the membrane; sequence YWWGS.

This sequence belongs to the cytochrome c oxidase subunit 3 family. As to quaternary structure, component of the cytochrome c oxidase (complex IV, CIV), a multisubunit enzyme composed of 14 subunits. The complex is composed of a catalytic core of 3 subunits MT-CO1, MT-CO2 and MT-CO3, encoded in the mitochondrial DNA, and 11 supernumerary subunits COX4I, COX5A, COX5B, COX6A, COX6B, COX6C, COX7A, COX7B, COX7C, COX8 and NDUFA4, which are encoded in the nuclear genome. The complex exists as a monomer or a dimer and forms supercomplexes (SCs) in the inner mitochondrial membrane with NADH-ubiquinone oxidoreductase (complex I, CI) and ubiquinol-cytochrome c oxidoreductase (cytochrome b-c1 complex, complex III, CIII), resulting in different assemblies (supercomplex SCI(1)III(2)IV(1) and megacomplex MCI(2)III(2)IV(2)).

It is found in the mitochondrion inner membrane. The catalysed reaction is 4 Fe(II)-[cytochrome c] + O2 + 8 H(+)(in) = 4 Fe(III)-[cytochrome c] + 2 H2O + 4 H(+)(out). Functionally, component of the cytochrome c oxidase, the last enzyme in the mitochondrial electron transport chain which drives oxidative phosphorylation. The respiratory chain contains 3 multisubunit complexes succinate dehydrogenase (complex II, CII), ubiquinol-cytochrome c oxidoreductase (cytochrome b-c1 complex, complex III, CIII) and cytochrome c oxidase (complex IV, CIV), that cooperate to transfer electrons derived from NADH and succinate to molecular oxygen, creating an electrochemical gradient over the inner membrane that drives transmembrane transport and the ATP synthase. Cytochrome c oxidase is the component of the respiratory chain that catalyzes the reduction of oxygen to water. Electrons originating from reduced cytochrome c in the intermembrane space (IMS) are transferred via the dinuclear copper A center (CU(A)) of subunit 2 and heme A of subunit 1 to the active site in subunit 1, a binuclear center (BNC) formed by heme A3 and copper B (CU(B)). The BNC reduces molecular oxygen to 2 water molecules using 4 electrons from cytochrome c in the IMS and 4 protons from the mitochondrial matrix. This Syncerus caffer (African buffalo) protein is Cytochrome c oxidase subunit 3 (MT-CO3).